Here is a 416-residue protein sequence, read N- to C-terminus: Adenylosuccinate synthetase (416 aa).

Residues Gly-13–Lys-19 and Gly-41–Thr-43 each bind GTP. The Proton acceptor role is filled by Asp-14. Mg(2+) is bound by residues Asp-14 and Gly-41. IMP-binding positions include Asp-14–Lys-17, Asn-39–His-42, Thr-126, Arg-140, Gln-220, Thr-235, and Arg-299. His-42 acts as the Proton donor in catalysis. Val-295–Arg-301 serves as a coordination point for substrate. GTP contacts are provided by residues Arg-301, Lys-327–Asp-329, and Ser-405–Ser-407.

It belongs to the adenylosuccinate synthetase family. In terms of assembly, homodimer. The cofactor is Mg(2+).

It localises to the cytoplasm. The enzyme catalyses IMP + L-aspartate + GTP = N(6)-(1,2-dicarboxyethyl)-AMP + GDP + phosphate + 2 H(+). The protein operates within purine metabolism; AMP biosynthesis via de novo pathway; AMP from IMP: step 1/2. Plays an important role in the de novo pathway of purine nucleotide biosynthesis. Catalyzes the first committed step in the biosynthesis of AMP from IMP. The sequence is that of Adenylosuccinate synthetase from Campylobacter jejuni subsp. jejuni serotype O:2 (strain ATCC 700819 / NCTC 11168).